A 293-amino-acid chain; its full sequence is Acetylglutamate kinase (293 aa).

Substrate contacts are provided by residues 68–69, arginine 90, and asparagine 189; that span reads GG.

It belongs to the acetylglutamate kinase family. ArgB subfamily.

Its subcellular location is the cytoplasm. It catalyses the reaction N-acetyl-L-glutamate + ATP = N-acetyl-L-glutamyl 5-phosphate + ADP. Its pathway is amino-acid biosynthesis; L-arginine biosynthesis; N(2)-acetyl-L-ornithine from L-glutamate: step 2/4. Catalyzes the ATP-dependent phosphorylation of N-acetyl-L-glutamate. The polypeptide is Acetylglutamate kinase (Mycolicibacterium smegmatis (strain ATCC 700084 / mc(2)155) (Mycobacterium smegmatis)).